Here is an 831-residue protein sequence, read N- to C-terminus: Probable beta-glucosidase H (831 aa).

Asparagine 13 is a glycosylation site (N-linked (GlcNAc...) asparagine). Residue aspartate 225 is part of the active site. Residues 389 to 549 (RLLSNAVIHF…DAEEMINRAV (161 aa)) enclose the PA14 domain. 6 N-linked (GlcNAc...) asparagine glycosylation sites follow: asparagine 474, asparagine 514, asparagine 604, asparagine 629, asparagine 726, and asparagine 823.

It belongs to the glycosyl hydrolase 3 family.

The protein localises to the secreted. It catalyses the reaction Hydrolysis of terminal, non-reducing beta-D-glucosyl residues with release of beta-D-glucose.. The protein operates within glycan metabolism; cellulose degradation. In terms of biological role, beta-glucosidases are one of a number of cellulolytic enzymes involved in the degradation of cellulosic biomass. Catalyzes the last step releasing glucose from the inhibitory cellobiose. This Emericella nidulans (strain FGSC A4 / ATCC 38163 / CBS 112.46 / NRRL 194 / M139) (Aspergillus nidulans) protein is Probable beta-glucosidase H (bglH).